Reading from the N-terminus, the 696-residue chain is DNA-directed RNA polymerase subunit beta' (696 aa).

Zn(2+) contacts are provided by Cys-70, Cys-72, Cys-85, and Cys-88. Residues Asp-540, Asp-542, and Asp-544 each coordinate Mg(2+).

It belongs to the RNA polymerase beta' chain family. RpoC1 subfamily. As to quaternary structure, in plastids the minimal PEP RNA polymerase catalytic core is composed of four subunits: alpha, beta, beta', and beta''. When a (nuclear-encoded) sigma factor is associated with the core the holoenzyme is formed, which can initiate transcription. The cofactor is Mg(2+). It depends on Zn(2+) as a cofactor.

The protein localises to the plastid. Its subcellular location is the chloroplast. It catalyses the reaction RNA(n) + a ribonucleoside 5'-triphosphate = RNA(n+1) + diphosphate. Functionally, DNA-dependent RNA polymerase catalyzes the transcription of DNA into RNA using the four ribonucleoside triphosphates as substrates. The polypeptide is DNA-directed RNA polymerase subunit beta' (Phaeodactylum tricornutum (strain CCAP 1055/1)).